A 29-amino-acid chain; its full sequence is uncharacterized protein (29 aa).

The helical transmembrane segment at 7–27 (FSLVTTIIVLGLIVAVGLTAA) threads the bilayer.

It localises to the cell inner membrane. This is an uncharacterized protein from Escherichia coli O6:K15:H31 (strain 536 / UPEC).